Reading from the N-terminus, the 133-residue chain is Large ribosomal subunit protein uL15 (133 aa).

Positions 1–64 (MGLENLKPAK…QPLQRRLPKI (64 aa)) are disordered.

This sequence belongs to the universal ribosomal protein uL15 family. As to quaternary structure, part of the 50S ribosomal subunit.

Its function is as follows. Binds to the 23S rRNA. In Helicobacter pylori (strain G27), this protein is Large ribosomal subunit protein uL15.